The chain runs to 453 residues: Ribulose bisphosphate carboxylase large chain (453 aa).

The propeptide occupies M1–S2. The residue at position 3 (P3) is an N-acetylproline. K14 is subject to N6,N6,N6-trimethyllysine. Substrate is bound by residues N123 and T173. K175 serves as the catalytic Proton acceptor. Residue K177 participates in substrate binding. Mg(2+) contacts are provided by K201, D203, and E204. K201 is subject to N6-carboxylysine. H294 serves as the catalytic Proton acceptor. Residues R295, H327, and S379 each contribute to the substrate site.

The protein belongs to the RuBisCO large chain family. Type I subfamily. As to quaternary structure, heterohexadecamer of 8 large chains and 8 small chains; disulfide-linked. The disulfide link is formed within the large subunit homodimers. Mg(2+) serves as cofactor. In terms of processing, the disulfide bond which can form in the large chain dimeric partners within the hexadecamer appears to be associated with oxidative stress and protein turnover.

It localises to the plastid. Its subcellular location is the chloroplast. The enzyme catalyses 2 (2R)-3-phosphoglycerate + 2 H(+) = D-ribulose 1,5-bisphosphate + CO2 + H2O. It carries out the reaction D-ribulose 1,5-bisphosphate + O2 = 2-phosphoglycolate + (2R)-3-phosphoglycerate + 2 H(+). Functionally, ruBisCO catalyzes two reactions: the carboxylation of D-ribulose 1,5-bisphosphate, the primary event in carbon dioxide fixation, as well as the oxidative fragmentation of the pentose substrate in the photorespiration process. Both reactions occur simultaneously and in competition at the same active site. The polypeptide is Ribulose bisphosphate carboxylase large chain (Galium lucidum).